The primary structure comprises 165 residues: Transcription antitermination protein NusB (165 aa).

Belongs to the NusB family.

Its function is as follows. Involved in transcription antitermination. Required for transcription of ribosomal RNA (rRNA) genes. Binds specifically to the boxA antiterminator sequence of the ribosomal RNA (rrn) operons. The sequence is that of Transcription antitermination protein NusB from Chlorobium phaeobacteroides (strain DSM 266 / SMG 266 / 2430).